The sequence spans 1624 residues: Latent-transforming growth factor beta-binding protein 4 (1624 aa).

Positions 1-27 (MPRPGTSGRRPLLLVLLLPLFAAATSA) are cleaved as a signal peptide. Positions 125 to 146 (RRPRGPGGRGLLRRRPPQRAPA) are disordered. The EGF-like 1 domain occupies 149 to 181 (APVLCPLICHNGGVCVKPDRCLCPPDFAGKFCQ). Cystine bridges form between C153–C163, C157–C169, C171–C180, C289–C311, C298–C324, and C312–C327. The TB 1 domain maps to 287–339 (GYCFRELRGGECASPLPGLRTQEVCCRGAGLAWGVHDCQLCSERLGNSERVSA). N352 carries an N-linked (GlcNAc...) asparagine glycan. One can recognise an EGF-like 2; calcium-binding domain in the interval 357-397 (DVDECATGGRCQHGECANTRGGYTCVCPDGFLLDSSRSSCI). 7 disulfides stabilise this stretch: C361–C372, C367–C381, C383–C396, C409–C431, C418–C444, C432–C447, and C433–C459. Positions 407–459 (GPCFRVLRDGGCSLPILRNITKQICCCSRVGKAWGRGCQLCPPFGSEGFREIC) constitute a TB 2 domain. Residue N425 is glycosylated (N-linked (GlcNAc...) asparagine). The segment at 474-546 (YNTRPLGQEP…PEIPESGPSS (73 aa)) is disordered. The segment covering 487-500 (SLSQPRTLPATSRP) has biased composition (polar residues). A compositionally biased stretch (basic and acidic residues) spans 508–522 (HRLEPRPEPRPDPRP). Residues 545–586 (SSGMCQRNPQVCGPGRCISRPSGYTCACDSGFRLSPQGTRCI) form the EGF-like 3 domain. Disulfide bonds link C549-C561, C556-C570, C572-C585, C591-C603, C598-C612, C614-C627, C633-C645, C640-C654, C656-C669, C675-C687, C682-C696, C698-C707, C714-C726, C721-C735, C737-C750, C756-C768, C763-C777, C779-C792, C838-C851, C845-C860, C862-C876, C882-C894, C888-C903, C905-C918, C924-C935, C930-C944, C946-C959, C1053-C1065, C1059-C1074, and C1076-C1089. The EGF-like 4; calcium-binding domain occupies 587–628 (DVDECRRVPPPCAPGRCENSPGSFRCVCGPGFRAGPRAAECL). The EGF-like 5; calcium-binding domain maps to 629–670 (DVDECHRVPPPCDLGRCENTPGSFLCVCPAGYQAAPHGASCQ). The region spanning 671 to 708 (DVDECTQSPGLCGRGACKNLPGSFRCVCPAGFRGSACE) is the EGF-like 6; calcium-binding domain. Residues 710–751 (DVDECAQEPPPCGPGRCDNTAGSFHCACPAGFRSRGPGAPCQ) enclose the EGF-like 7; calcium-binding domain. Residues 752–793 (DVDECARSPPPCTYGRCENTEGSFQCVCPMGFQPNTAGSECE) form the EGF-like 8; calcium-binding domain. The region spanning 834-877 (DVDECSSGAPPCGPHGHCTNTEGSFRCSCAPGYRAPSGRPGPCA) is the EGF-like 9; calcium-binding domain. The EGF-like 10; calcium-binding domain maps to 878–919 (DVNECLEGDFCFPHGECLNTDGSFACTCAPGYRPGPRGASCL). An EGF-like 11; calcium-binding domain is found at 920-960 (DVDECSEEDLCQSGICTNTDGSFECICPPGHRAGPDLASCL). In terms of domain architecture, EGF-like 12; calcium-binding spans 1049 to 1090 (DVDECRNRSFCGAHAVCQNLPGSFQCLCDQGYEGARDGRHCV). N1055 carries N-linked (GlcNAc...) asparagine glycosylation. The tract at residues 1130–1179 (GRCVPPRTSAGTFPGSQPQAPASPVLPARPPPPPLPRRPSTPRQGPVGSG) is disordered. The segment covering 1138-1149 (SAGTFPGSQPQA) has biased composition (polar residues). Residues 1156-1168 (PARPPPPPLPRRP) are compositionally biased toward pro residues. A TB 3 domain is found at 1181–1235 (RECYFDTAAPDACDNILARNVTWQECCCTVGEGWGSGCRIQQCPGTETAEYQSLC). Cystine bridges form between C1183–C1206, C1193–C1218, C1207–C1223, C1208–C1235, C1257–C1270, C1265–C1279, C1281–C1294, C1300–C1312, C1307–C1321, and C1323–C1336. N1200 carries an N-linked (GlcNAc...) asparagine glycan. Residues 1253–1295 (DVDECQLFRDQVCKSGVCVNTAPGYSCYCSNGYYYHTQRLECI) form the EGF-like 13; calcium-binding domain. In terms of domain architecture, EGF-like 14; calcium-binding spans 1296–1337 (DNDECADEEPACEGGRCVNTVGSYHCTCEPPLVLDGSQRRCV). N1339 carries N-linked (GlcNAc...) asparagine glycosylation. Residues 1349–1402 (GVCWQEVGADLVCSHPRLDRQATYTECCCLYGEAWGMDCALCPAQDSDDFEALC) form the TB 4 domain. Cystine bridges form between C1351-C1375, C1361-C1387, C1376-C1390, and C1377-C1402. The segment covering 1446–1458 (ALPYDPYPPPPGP) has biased composition (pro residues). Residues 1446 to 1524 (ALPYDPYPPP…PPEGGSYAGS (79 aa)) form a disordered region. A compositionally biased stretch (basic and acidic residues) spans 1501-1510 (RSRDTRRSFP). EGF-like domains lie at 1533–1573 (EAEE…MACV) and 1574–1618 (DINE…HHCA). 6 cysteine pairs are disulfide-bonded: C1537–C1548, C1543–C1557, C1559–C1572, C1578–C1593, C1588–C1602, and C1604–C1617.

The protein belongs to the LTBP family. In terms of assembly, forms part of the large latent transforming growth factor beta precursor complex; removal is essential for activation of complex. Interacts with LTBP1 and TGFB1. Interacts with EFEMP2; this interaction promotes fibrillar deposition of EFEMP2. Post-translationally, contains hydroxylated asparagine residues. As to expression, highly expressed in heart, skeletal muscle, pancreas, uterus, and small intestine. Weakly expressed in placenta and lung.

It localises to the secreted. Its subcellular location is the extracellular space. The protein resides in the extracellular matrix. In terms of biological role, key regulator of transforming growth factor beta (TGFB1, TGFB2 and TGFB3) that controls TGF-beta activation by maintaining it in a latent state during storage in extracellular space. Associates specifically via disulfide bonds with the Latency-associated peptide (LAP), which is the regulatory chain of TGF-beta, and regulates integrin-dependent activation of TGF-beta. In Homo sapiens (Human), this protein is Latent-transforming growth factor beta-binding protein 4 (LTBP4).